The primary structure comprises 317 residues: 4-diphosphocytidyl-2-C-methyl-D-erythritol kinase (317 aa).

Lys11 is an active-site residue. 99-109 lines the ATP pocket; sequence PVAAGLAGGST. Asp141 is a catalytic residue.

Belongs to the GHMP kinase family. IspE subfamily.

The enzyme catalyses 4-CDP-2-C-methyl-D-erythritol + ATP = 4-CDP-2-C-methyl-D-erythritol 2-phosphate + ADP + H(+). It participates in isoprenoid biosynthesis; isopentenyl diphosphate biosynthesis via DXP pathway; isopentenyl diphosphate from 1-deoxy-D-xylulose 5-phosphate: step 3/6. Functionally, catalyzes the phosphorylation of the position 2 hydroxy group of 4-diphosphocytidyl-2C-methyl-D-erythritol. In Trichormus variabilis (strain ATCC 29413 / PCC 7937) (Anabaena variabilis), this protein is 4-diphosphocytidyl-2-C-methyl-D-erythritol kinase.